Here is a 79-residue protein sequence, read N- to C-terminus: Cyclin-dependent kinases regulatory subunit 2 (79 aa).

The protein belongs to the CKS family. As to quaternary structure, forms a homohexamer that can probably bind six kinase subunits.

Functionally, binds to the catalytic subunit of the cyclin dependent kinases and is essential for their biological function. This Xenopus laevis (African clawed frog) protein is Cyclin-dependent kinases regulatory subunit 2 (cks2).